The primary structure comprises 236 residues: Phosphoribosylaminoimidazole-succinocarboxamide synthase (236 aa).

The protein belongs to the SAICAR synthetase family.

It catalyses the reaction 5-amino-1-(5-phospho-D-ribosyl)imidazole-4-carboxylate + L-aspartate + ATP = (2S)-2-[5-amino-1-(5-phospho-beta-D-ribosyl)imidazole-4-carboxamido]succinate + ADP + phosphate + 2 H(+). It participates in purine metabolism; IMP biosynthesis via de novo pathway; 5-amino-1-(5-phospho-D-ribosyl)imidazole-4-carboxamide from 5-amino-1-(5-phospho-D-ribosyl)imidazole-4-carboxylate: step 1/2. The protein is Phosphoribosylaminoimidazole-succinocarboxamide synthase of Pseudomonas syringae pv. syringae (strain B728a).